The sequence spans 204 residues: Large ribosomal subunit protein eL15 (204 aa).

Belongs to the eukaryotic ribosomal protein eL15 family. As to quaternary structure, component of the large ribosomal subunit.

The protein localises to the cytoplasm. Its function is as follows. Component of the large ribosomal subunit. The ribosome is a large ribonucleoprotein complex responsible for the synthesis of proteins in the cell. This Paramisgurnus dabryanus protein is Large ribosomal subunit protein eL15 (rpl15).